The following is a 292-amino-acid chain: uncharacterized protein (292 aa).

Residues threonine 43 and tyrosine 105 each act as charge relay system in the active site. Tyrosine 131 functions as the Proton donor in the catalytic mechanism. The active-site Schiff-base intermediate with substrate is lysine 159.

The protein belongs to the DapA family. In terms of assembly, homotetramer.

It is found in the cytoplasm. This is an uncharacterized protein from Thermococcus kodakarensis (strain ATCC BAA-918 / JCM 12380 / KOD1) (Pyrococcus kodakaraensis (strain KOD1)).